We begin with the raw amino-acid sequence, 481 residues long: MGSHVAQKQHVVCVPYPAQGHINPMMKVAKLLYAKGFHITFVNTVYNHNRLLRSRGPNAVDGLPSFRFESIPDGLPETDVDVTQDIPTLCESTMKHCLAPFKELLRQINARDDVPPVSCIVSDGCMSFTLDAAEELGVPEVLFWTTSACGFLAYLYYYRFIEKGLSPIKDESYLTKEHLDTKIDWIPSMKNLRLKDIPSFIRTTNPDDIMLNFIIREADRAKRASAIILNTFDDLEHDVIQSMKSIVPPVYSIGPLHLLEKQESGEYSEIGRTGSNLWREETECLDWLNTKARNSVVYVNFGSITVLSAKQLVEFAWGLAATGKEFLWVIRPDLVAGDEAMVPPEFLTATADRRMLASWCPQEKVLSHPAIGGFLTHCGWNSTLESLCGGVPMVCWPFFAEQQTNCKFSRDEWEVGIEIGGDVKREEVEAVVRELMDEEKGKNMREKAEEWRRLANEATEHKHGSSKLNFEMLVNKVLLGE.

UDP-alpha-D-glucose contacts are provided by residues serine 303, 360-362 (CPQ), 377-385 (HCGWNSTLE), and 399-402 (FAEQ).

It belongs to the UDP-glycosyltransferase family. As to expression, expressed in roots, shoots, leaves and flowers.

The polypeptide is UDP-glycosyltransferase 85A2 (UGT85A2) (Arabidopsis thaliana (Mouse-ear cress)).